Consider the following 456-residue polypeptide: Exodeoxyribonuclease 7 large subunit (456 aa).

This sequence belongs to the XseA family. In terms of assembly, heterooligomer composed of large and small subunits.

The protein localises to the cytoplasm. The catalysed reaction is Exonucleolytic cleavage in either 5'- to 3'- or 3'- to 5'-direction to yield nucleoside 5'-phosphates.. Bidirectionally degrades single-stranded DNA into large acid-insoluble oligonucleotides, which are then degraded further into small acid-soluble oligonucleotides. The polypeptide is Exodeoxyribonuclease 7 large subunit (Lactobacillus delbrueckii subsp. bulgaricus (strain ATCC BAA-365 / Lb-18)).